Consider the following 917-residue polypeptide: Chitin synthase 1 (917 aa).

Residues 1 to 11 are compositionally biased toward basic and acidic residues; the sequence is MAYHGRGDGYD. The interval 1–56 is disordered; that stretch reads MAYHGRGDGYDGHQLQDLPGGHNQGDQHDDAQAPFLSENPMPYDNDRLGTDTPPVR. Residues 1–570 are Extracellular-facing; it reads MAYHGRGDGY…YKSGHNIVRM (570 aa). N-linked (GlcNAc...) asparagine glycosylation occurs at Asn-544. The helical transmembrane segment at 571–591 threads the bilayer; that stretch reads FFFHVQLIYNIANVIFTWFSL. Topologically, residues 592–629 are cytoplasmic; the sequence is ASYWLTTTVIMDLVGTPVTASSSSAEHHGWPFGDTVTP. A helical transmembrane segment spans residues 630-650; the sequence is FFNAVLKYIYLAFVILQFILA. Residues 651–664 are Extracellular-facing; it reads LGNRPKGSKWTYIT. The chain crosses the membrane as a helical span at residues 665 to 685; sequence SFFVFSLIQSYILVLSGYLVA. At 686 to 716 the chain is on the cytoplasmic side; sequence RAFSVPLDQQLQLDNAKDAMASLFGGSGSAG. A helical membrane pass occupies residues 717 to 737; the sequence is VILVALVTIYGLYFLASFMYL. Topologically, residues 738–744 are extracellular; that stretch reads DPWHMFH. The chain crosses the membrane as a helical span at residues 745 to 765; sequence SFPYYMLLMSTYINILMIYAF. Over 766-843 the chain is Cytoplasmic; it reads NNWHDVSWGT…DLEDSYKSFR (78 aa). A helical membrane pass occupies residues 844–864; sequence TMLVVSWLFSNCLLAVVITSD. Residues 865–884 are Extracellular-facing; it reads NFNTFGIGQTASARTAWFFK. Residues 885–905 traverse the membrane as a helical segment; it reads FLLFATGALSVIRFIGFCWFL. Residues 906 to 917 are Cytoplasmic-facing; that stretch reads GRTGIMCCFARR.

The protein belongs to the chitin synthase family. Class III subfamily.

Its subcellular location is the cell membrane. It catalyses the reaction [(1-&gt;4)-N-acetyl-beta-D-glucosaminyl](n) + UDP-N-acetyl-alpha-D-glucosamine = [(1-&gt;4)-N-acetyl-beta-D-glucosaminyl](n+1) + UDP + H(+). Its function is as follows. Polymerizes chitin, a structural polymer of the cell wall and septum, by transferring the sugar moiety of UDP-GlcNAc to the non-reducing end of the growing chitin polymer. This chain is Chitin synthase 1 (chs-1), found in Neurospora crassa (strain ATCC 24698 / 74-OR23-1A / CBS 708.71 / DSM 1257 / FGSC 987).